The chain runs to 259 residues: MGLIPHSIIRTLSRLRTEFMSKSGPLVFYEMEVAKKRASASLRYLTCLLVLPWVISILLQKSIEPWVTFWWNTSSFDILDFLEEENTLVIFGQIEELLLFERMIENYSETYSKPSSKEIKKKTNVIKLYKKDCIHIITHLFTNFIGFALLSTYLVMGQKKLAIFFSWIREFFYSMSDTMKAFSILLATDLCIGFHSPHGWELLIDWISENYGFVHNDRIISSLVSTFPVILDTIFKYWIFRRFNRISPSLVVIYHSMNE.

4 helical membrane-spanning segments follow: residues 47–67 (CLLV…EPWV), 136–156 (IITH…YLVM), 184–204 (ILLA…ELLI), and 219–239 (IISS…KYWI).

This sequence belongs to the CemA family.

The protein resides in the plastid. It is found in the chloroplast inner membrane. The catalysed reaction is K(+)(in) + H(+)(out) = K(+)(out) + H(+)(in). Its function is as follows. Contributes to K(+)/H(+) antiport activity by supporting proton efflux to control proton extrusion and homeostasis in chloroplasts in a light-dependent manner to modulate photosynthesis. Prevents excessive induction of non-photochemical quenching (NPQ) under continuous-light conditions. Indirectly promotes efficient inorganic carbon uptake into chloroplasts. The polypeptide is Potassium/proton antiporter CemA (Welwitschia mirabilis (Tree tumbo)).